Here is a 201-residue protein sequence, read N- to C-terminus: Large ribosomal subunit protein uL4 (201 aa).

The interval 44-71 (RAQKTRAEVSGSGKKPWRQKGTGRARSG) is disordered.

The protein belongs to the universal ribosomal protein uL4 family. In terms of assembly, part of the 50S ribosomal subunit.

Functionally, one of the primary rRNA binding proteins, this protein initially binds near the 5'-end of the 23S rRNA. It is important during the early stages of 50S assembly. It makes multiple contacts with different domains of the 23S rRNA in the assembled 50S subunit and ribosome. Its function is as follows. Forms part of the polypeptide exit tunnel. This is Large ribosomal subunit protein uL4 from Photorhabdus laumondii subsp. laumondii (strain DSM 15139 / CIP 105565 / TT01) (Photorhabdus luminescens subsp. laumondii).